Here is a 95-residue protein sequence, read N- to C-terminus: Co-chaperonin GroES (95 aa).

This sequence belongs to the GroES chaperonin family. In terms of assembly, heptamer of 7 subunits arranged in a ring. Interacts with the chaperonin GroEL.

The protein resides in the cytoplasm. Functionally, together with the chaperonin GroEL, plays an essential role in assisting protein folding. The GroEL-GroES system forms a nano-cage that allows encapsulation of the non-native substrate proteins and provides a physical environment optimized to promote and accelerate protein folding. GroES binds to the apical surface of the GroEL ring, thereby capping the opening of the GroEL channel. The sequence is that of Co-chaperonin GroES from Stenotrophomonas maltophilia (strain K279a).